The primary structure comprises 1179 residues: ATP-dependent helicase/deoxyribonuclease subunit B (1179 aa).

This sequence belongs to the helicase family. AddB/RexB type 2 subfamily. In terms of assembly, heterodimer of AddA and RexB. The cofactor is Mg(2+).

Its function is as follows. The heterodimer acts as both an ATP-dependent DNA helicase and an ATP-dependent, dual-direction single-stranded exonuclease. Recognizes the chi site generating a DNA molecule suitable for the initiation of homologous recombination. This subunit has 5' -&gt; 3' nuclease activity but not helicase activity. This is ATP-dependent helicase/deoxyribonuclease subunit B from Lactobacillus delbrueckii subsp. bulgaricus (strain ATCC BAA-365 / Lb-18).